The following is a 451-amino-acid chain: Bifunctional protein GlmU (451 aa).

The pyrophosphorylase stretch occupies residues 1–230 (MNNPIAAIVL…PADVGGINSR (230 aa)). UDP-N-acetyl-alpha-D-glucosamine contacts are provided by residues 10 to 13 (LAAG), K24, Q74, 79 to 80 (GT), 102 to 104 (YGD), G142, E156, N171, and N228. Mg(2+) is bound at residue D104. Residue N228 participates in Mg(2+) binding. The interval 231–251 (AELAAAEAQWQAFRREEAMAA) is linker. The interval 252 to 451 (GASLRAPETV…RKKKAAEQKK (200 aa)) is N-acetyltransferase. The UDP-N-acetyl-alpha-D-glucosamine site is built by R317 and K335. Residue H347 is the Proton acceptor of the active site. Residues Y350 and N361 each coordinate UDP-N-acetyl-alpha-D-glucosamine. Residues A364, 370 to 371 (NY), S389, A407, and R424 contribute to the acetyl-CoA site.

In the N-terminal section; belongs to the N-acetylglucosamine-1-phosphate uridyltransferase family. The protein in the C-terminal section; belongs to the transferase hexapeptide repeat family. Homotrimer. Requires Mg(2+) as cofactor.

The protein resides in the cytoplasm. The catalysed reaction is alpha-D-glucosamine 1-phosphate + acetyl-CoA = N-acetyl-alpha-D-glucosamine 1-phosphate + CoA + H(+). It catalyses the reaction N-acetyl-alpha-D-glucosamine 1-phosphate + UTP + H(+) = UDP-N-acetyl-alpha-D-glucosamine + diphosphate. It participates in nucleotide-sugar biosynthesis; UDP-N-acetyl-alpha-D-glucosamine biosynthesis; N-acetyl-alpha-D-glucosamine 1-phosphate from alpha-D-glucosamine 6-phosphate (route II): step 2/2. The protein operates within nucleotide-sugar biosynthesis; UDP-N-acetyl-alpha-D-glucosamine biosynthesis; UDP-N-acetyl-alpha-D-glucosamine from N-acetyl-alpha-D-glucosamine 1-phosphate: step 1/1. It functions in the pathway bacterial outer membrane biogenesis; LPS lipid A biosynthesis. In terms of biological role, catalyzes the last two sequential reactions in the de novo biosynthetic pathway for UDP-N-acetylglucosamine (UDP-GlcNAc). The C-terminal domain catalyzes the transfer of acetyl group from acetyl coenzyme A to glucosamine-1-phosphate (GlcN-1-P) to produce N-acetylglucosamine-1-phosphate (GlcNAc-1-P), which is converted into UDP-GlcNAc by the transfer of uridine 5-monophosphate (from uridine 5-triphosphate), a reaction catalyzed by the N-terminal domain. This is Bifunctional protein GlmU from Sphingopyxis alaskensis (strain DSM 13593 / LMG 18877 / RB2256) (Sphingomonas alaskensis).